The chain runs to 152 residues: MANLERTFIAIKPDGVQRGLVGEIIKRFEQKGFRLVAMKFLRASEEHLKQHYIDLKDRPFFPGLVKYMNSGPVVAMVWEGLNVVKTGRVMLGETNPADSKPGTIRGDFCIQVGRNIIHGSDSVKSAEKEISLWFKPEELVDYKSCAHDWVYE.

The interval 1-66 (MANLERTFIA…DRPFFPGLVK (66 aa)) is interaction with AKAP13. ATP-binding residues include K12, F60, R88, T94, R105, and N115. H118 (pros-phosphohistidine intermediate) is an active-site residue.

It belongs to the NDK family. Hexamer of two different chains: An and B (A6, A5B, A4B2, A3B3, A2B4, AB5, B6). Interacts with CAPN8. Interacts with AKAP13. Interacts with ITGB1BP1 (via C-terminal domain region). Interacts with BCL2L10. Requires Mg(2+) as cofactor. Ubiquitously expressed.

It is found in the cytoplasm. The protein resides in the cell projection. Its subcellular location is the lamellipodium. It localises to the ruffle. The protein localises to the perinuclear region. It is found in the nucleus. It carries out the reaction a 2'-deoxyribonucleoside 5'-diphosphate + ATP = a 2'-deoxyribonucleoside 5'-triphosphate + ADP. The enzyme catalyses a ribonucleoside 5'-diphosphate + ATP = a ribonucleoside 5'-triphosphate + ADP. It catalyses the reaction ATP + protein L-histidine = ADP + protein N-phospho-L-histidine.. Major role in the synthesis of nucleoside triphosphates other than ATP. The ATP gamma phosphate is transferred to the NDP beta phosphate via a ping-pong mechanism, using a phosphorylated active-site intermediate. Negatively regulates Rho activity by interacting with AKAP13/LBC. Acts as a transcriptional activator of the MYC gene; binds DNA non-specifically. Binds to both single-stranded guanine- and cytosine-rich strands within the nuclease hypersensitive element (NHE) III(1) region of the MYC gene promoter. Does not bind to duplex NHE III(1). Has G-quadruplex (G4) DNA-binding activity, which is independent of its nucleotide-binding and kinase activity. Binds both folded and unfolded G4 with similar low nanomolar affinities. Stabilizes folded G4s regardless of whether they are prefolded or not. Exhibits histidine protein kinase activity. This Homo sapiens (Human) protein is Nucleoside diphosphate kinase B (NME2).